Consider the following 198-residue polypeptide: Ribosome maturation factor RimP (198 aa).

The protein belongs to the RimP family.

It localises to the cytoplasm. Its function is as follows. Required for maturation of 30S ribosomal subunits. The polypeptide is Ribosome maturation factor RimP (Rhizobium etli (strain CIAT 652)).